The sequence spans 371 residues: Cytochrome b (371 aa).

4 consecutive transmembrane segments (helical) span residues 25-45 (FGSM…FLAI), 69-90 (WIMQ…YIHI), 105-125 (WLTG…GYVL), and 170-190 (FFAL…IHII). The heme b site is built by H75 and H89. The heme b site is built by H174 and H188. Position 193 (H193) interacts with a ubiquinone. The next 4 membrane-spanning stretches (helical) occupy residues 218 to 238 (YKDL…LSFM), 280 to 300 (LGGA…PFTH), 312 to 332 (LAQT…WAAT), and 339 to 358 (FLLI…IMNP).

The protein belongs to the cytochrome b family. The cytochrome bc1 complex contains 3 respiratory subunits (MT-CYB, CYC1 and UQCRFS1), 2 core proteins (UQCRC1 and UQCRC2) and probably 6 low-molecular weight proteins. Heme b is required as a cofactor.

It is found in the mitochondrion inner membrane. Component of the ubiquinol-cytochrome c reductase complex (complex III or cytochrome b-c1 complex) that is part of the mitochondrial respiratory chain. The b-c1 complex mediates electron transfer from ubiquinol to cytochrome c. Contributes to the generation of a proton gradient across the mitochondrial membrane that is then used for ATP synthesis. This Laticauda colubrina (Yellow-lipped sea krait) protein is Cytochrome b (MT-CYB).